The sequence spans 443 residues: ATP-dependent protease ATPase subunit HslU (443 aa).

ATP-binding positions include Ile18, 60-65, Asp256, Glu321, and Arg393; that span reads GVGKTE.

This sequence belongs to the ClpX chaperone family. HslU subfamily. In terms of assembly, a double ring-shaped homohexamer of HslV is capped on each side by a ring-shaped HslU homohexamer. The assembly of the HslU/HslV complex is dependent on binding of ATP.

It is found in the cytoplasm. ATPase subunit of a proteasome-like degradation complex; this subunit has chaperone activity. The binding of ATP and its subsequent hydrolysis by HslU are essential for unfolding of protein substrates subsequently hydrolyzed by HslV. HslU recognizes the N-terminal part of its protein substrates and unfolds these before they are guided to HslV for hydrolysis. The sequence is that of ATP-dependent protease ATPase subunit HslU from Vibrio cholerae serotype O1 (strain ATCC 39315 / El Tor Inaba N16961).